The chain runs to 152 residues: Small ribosomal subunit protein uS19z (152 aa).

It belongs to the universal ribosomal protein uS19 family.

It localises to the cytoplasm. This Arabidopsis thaliana (Mouse-ear cress) protein is Small ribosomal subunit protein uS19z (RPS15B).